We begin with the raw amino-acid sequence, 3133 residues long: Cysteine repeat modular protein A (3133 aa).

Positions 1 to 39 (MDSASTSMSRVHPSGVYRRPLLPSGGPRSTSERDERVDL) are disordered. The span at 30–39 (TSERDERVDL) shows a compositional bias: basic and acidic residues. A helical transmembrane segment spans residues 123–143 (LFLLFSSSPLLLLLLLHQFFI). Basic and acidic residues-rich tracts occupy residues 173–211 (TFEEREADSHRGSRDGEKVSGSRDIRFEEQEIRSRDGKE) and 301–311 (NESEKAERARL). 2 disordered regions span residues 173 to 234 (TFEE…EGRR) and 294 to 317 (VSPSHSGNESEKAERARLEQSTPA). 3 N-linked (GlcNAc...) asparagine glycosylation sites follow: Asn301, Asn392, and Asn470. In terms of domain architecture, Kringle spans 577-644 (DETLEQGKLY…DPHVRFDFCD (68 aa)). 2 disulfides stabilise this stretch: Cys599–Cys631 and Cys620–Cys643. Residues Asn1364 and Asn1532 are each glycosylated (N-linked (GlcNAc...) asparagine). A run of 3 helical transmembrane segments spans residues 2229 to 2249 (MVWNIVCLMGYYLATLLFNIV), 2276 to 2296 (LTGISVLSVIDFSTIAFPSWI), and 2339 to 2359 (VFYALIPIALPIVATIIMSII). The N-linked (GlcNAc...) asparagine glycan is linked to Asn2369. Helical transmembrane passes span 2420–2440 (AAKFMEDMIPIYVTVLFFVYS), 2489–2509 (VGITGLLVWSIGIPLSCFLVL), and 2539–2559 (WEMVVFARKFLVIVVSSVALI). A glycan (N-linked (GlcNAc...) asparagine) is linked at Asn2565. The helical transmembrane segment at 2569–2589 (VWLAVVIAVIFLIIHLVTQPF) threads the bilayer. Asn2602 is a glycosylation site (N-linked (GlcNAc...) asparagine). A run of 2 helical transmembrane segments spans residues 2607–2627 (IWTITLIVLAMMIGSDFSGSV) and 2632–2652 (LLFVAVLSCMFILEVGVSLMF). 2 stretches are compositionally biased toward basic and acidic residues: residues 2827 to 2838 (FAAKDETPTAEE) and 3049 to 3069 (QEENARRKLEKEEREEADREI). Disordered stretches follow at residues 2827–2847 (FAAKDETPTAEEKTEEQDERL) and 3049–3101 (QEEN…LPEG). Residues 2955–3068 (SEALQKRNRK…KEEREEADRE (114 aa)) adopt a coiled-coil conformation. Over residues 3083–3094 (GEDDTATIDDSS) the composition is skewed to acidic residues.

As to quaternary structure, component of a complex, at least composed of cysteine repeat modular protein A (CRMPa), cysteine repeat modular protein B (CRMPb), micronemal protein 15 (MIC15) and thrombospondin type 1 domain-containing protein (TSP1).

The protein resides in the cell membrane. The protein localises to the endoplasmic reticulum. It is found in the golgi apparatus. Required for triggering rhoptry secretion. Plays a role in host cell invasion. This Toxoplasma gondii protein is Cysteine repeat modular protein A.